Consider the following 390-residue polypeptide: Lipid-A-disaccharide synthase (390 aa).

The protein belongs to the LpxB family.

The catalysed reaction is a lipid X + a UDP-2-N,3-O-bis[(3R)-3-hydroxyacyl]-alpha-D-glucosamine = a lipid A disaccharide + UDP + H(+). It functions in the pathway bacterial outer membrane biogenesis; LPS lipid A biosynthesis. Functionally, condensation of UDP-2,3-diacylglucosamine and 2,3-diacylglucosamine-1-phosphate to form lipid A disaccharide, a precursor of lipid A, a phosphorylated glycolipid that anchors the lipopolysaccharide to the outer membrane of the cell. In Paramagnetospirillum magneticum (strain ATCC 700264 / AMB-1) (Magnetospirillum magneticum), this protein is Lipid-A-disaccharide synthase.